The sequence spans 146 residues: Small ribosomal subunit protein uS5 (146 aa).

Residues 8–71 enclose the S5 DRBM domain; the sequence is FKEVVVNIGR…DDAFKNIIKV (64 aa).

The protein belongs to the universal ribosomal protein uS5 family. Part of the 30S ribosomal subunit. Contacts proteins S4 and S8.

In terms of biological role, with S4 and S12 plays an important role in translational accuracy. Located at the back of the 30S subunit body where it stabilizes the conformation of the head with respect to the body. This Wolinella succinogenes (strain ATCC 29543 / DSM 1740 / CCUG 13145 / JCM 31913 / LMG 7466 / NCTC 11488 / FDC 602W) (Vibrio succinogenes) protein is Small ribosomal subunit protein uS5.